The following is a 371-amino-acid chain: Opsin, ultraviolet-sensitive (371 aa).

The Extracellular segment spans residues 1–52 (MSNDSIHWEARYLPAGPPRLLGWNVPAEELIHIPEHWLVYPEPNPSLHYLLA). A glycan (N-linked (GlcNAc...) asparagine) is linked at N3. The chain crosses the membrane as a helical span at residues 53-73 (LLYILFTFLALLGNGLVIWIF). The Cytoplasmic portion of the chain corresponds to 74–84 (CAAKSLRTPSN). Residues 85-105 (MFVVNLAICDFFMMIKTPIFI) traverse the membrane as a helical segment. Over 106 to 121 (YNSFNTGFALGNLGCQ) the chain is Extracellular. C120 and C197 are disulfide-bonded. A helical membrane pass occupies residues 122-142 (IFAVIGSLTGIGAAITNAAIA). The Cytoplasmic portion of the chain corresponds to 143-161 (YDRYSTIARPLDGKLSRGQ). Residues 162-182 (VILFIVLIWTYTIPWALMPVM) form a helical membrane-spanning segment. Over 183 to 209 (GVWGRFVPEGFLTSCSFDYLTDTNEIR) the chain is Extracellular. A helical transmembrane segment spans residues 210–230 (IFVATIFTFSYCIPMILIIYY). The Cytoplasmic segment spans residues 231–278 (YSQIVSHVVNHEKALREQAKKMNVDSLRSNANTSSQSAEIRIAKAAIT). The helical transmembrane segment at 279–299 (ICFLYVLSWTPYGVMSMIGAF) threads the bilayer. Residues 300 to 302 (GNK) lie on the Extracellular side of the membrane. Residues 303–323 (ALLTPGVTMIPACTCKAVACL) traverse the membrane as a helical segment. K318 bears the N6-(retinylidene)lysine mark. Over 324–371 (DPYVYAISHPKYRLELQKRLPWLELQEKPISDSTSTTTETVNTPPASS) the chain is Cytoplasmic.

This sequence belongs to the G-protein coupled receptor 1 family. Opsin subfamily. In terms of processing, phosphorylated on some or all of the serine and threonine residues present in the C-terminal region. As to expression, expressed in the dorsal region of the retina.

It is found in the membrane. Functionally, visual pigments are the light-absorbing molecules that mediate vision. They consist of an apoprotein, opsin, covalently linked to 11-cis-retinal. The chain is Opsin, ultraviolet-sensitive (UVOP) from Apis mellifera (Honeybee).